A 616-amino-acid polypeptide reads, in one-letter code: Chaperone protein HtpG (616 aa).

Positions 1 to 334 are a; substrate-binding; sequence MTIKQTHSFQ…TADLSLNLSR (334 aa). The segment at 335 to 549 is b; that stretch reads EILQDNKVIK…ENEMGGNMER (215 aa). The tract at residues 550-616 is c; it reads IMKSLGQDIP…FVKRINKLIN (67 aa).

The protein belongs to the heat shock protein 90 family. In terms of assembly, homodimer.

It is found in the cytoplasm. In terms of biological role, molecular chaperone. Has ATPase activity. The protein is Chaperone protein HtpG of Vesicomyosocius okutanii subsp. Calyptogena okutanii (strain HA).